Consider the following 172-residue polypeptide: 3-phenylpropionate/cinnamic acid dioxygenase subunit beta (172 aa).

The protein belongs to the bacterial ring-hydroxylating dioxygenase beta subunit family. In terms of assembly, this dioxygenase system consists of four proteins: the two subunits of the hydroxylase component (HcaE and HcaF), a ferredoxin (HcaC) and a ferredoxin reductase (HcaD).

The enzyme catalyses 3-phenylpropanoate + NADH + O2 + H(+) = 3-(cis-5,6-dihydroxycyclohexa-1,3-dien-1-yl)propanoate + NAD(+). The catalysed reaction is (E)-cinnamate + NADH + O2 + H(+) = (2E)-3-(cis-5,6-dihydroxycyclohexa-1,3-dien-1-yl)prop-2-enoate + NAD(+). The protein operates within aromatic compound metabolism; 3-phenylpropanoate degradation. Part of the multicomponent 3-phenylpropionate dioxygenase. Converts 3-phenylpropionic acid (PP) and cinnamic acid (CI) into 3-phenylpropionate-dihydrodiol (PP-dihydrodiol) and cinnamic acid-dihydrodiol (CI-dihydrodiol), respectively. The polypeptide is 3-phenylpropionate/cinnamic acid dioxygenase subunit beta (Shigella sonnei (strain Ss046)).